Reading from the N-terminus, the 467-residue chain is DNA repair protein RadA (467 aa).

The segment at 10-27 (CQNCGAVHSRWAGKCDSC) adopts a C4-type zinc-finger fold. 98–105 (GDPGIGKS) is a binding site for ATP. Positions 260–264 (KNRFG) match the RadA KNRFG motif motif. The segment at 359–467 (DVYLNVAGGY…RIAASGAGKK (109 aa)) is lon-protease-like.

Belongs to the RecA family. RadA subfamily.

DNA-dependent ATPase involved in processing of recombination intermediates, plays a role in repairing DNA breaks. Stimulates the branch migration of RecA-mediated strand transfer reactions, allowing the 3' invading strand to extend heteroduplex DNA faster. Binds ssDNA in the presence of ADP but not other nucleotides, has ATPase activity that is stimulated by ssDNA and various branched DNA structures, but inhibited by SSB. Does not have RecA's homology-searching function. In Brucella abortus (strain 2308), this protein is DNA repair protein RadA.